The sequence spans 416 residues: E3 ubiquitin-protein ligase makorin-2 (416 aa).

2 consecutive C3H1-type zinc fingers follow at residues Ser2 to Ala29 and Ser31 to Pro58. Basic and acidic residues predominate over residues Asn113–Thr122. The segment at Asn113–Met142 is disordered. Residues Gln123–Pro136 show a composition bias toward polar residues. At Ser139 the chain carries Phosphoserine. The segment at Ser165 to Val192 adopts a C3H1-type 3 zinc-finger fold. Positions Cys193–His222 are makorin-type Cys-His. The segment at Cys238 to Arg292 adopts an RING-type zinc-finger fold. A C3H1-type 4 zinc finger spans residues Gly321–Pro350.

Interacts with PDLIM2 (via LIM zinc-binding domain). Interacts with RELA. In terms of tissue distribution, expressed in sperm, with significantly reduced expression in sperm of patients with oligoasthenoteratozoospermia (at protein level). Widely expressed with expression in testis, ovary, small intestine, colon, peripheral blood leukocytes, fetal liver, bone marrow, thymus, lymph node and spleen.

The protein resides in the cytoplasm. The protein localises to the nucleus. It catalyses the reaction S-ubiquitinyl-[E2 ubiquitin-conjugating enzyme]-L-cysteine + [acceptor protein]-L-lysine = [E2 ubiquitin-conjugating enzyme]-L-cysteine + N(6)-ubiquitinyl-[acceptor protein]-L-lysine.. The protein operates within protein modification; protein ubiquitination. E3 ubiquitin ligase catalyzing the covalent attachment of ubiquitin moieties onto substrate proteins. Promotes the polyubiquitination and proteasome-dependent degradation of RELA/p65, thereby suppressing RELA-mediated NF-kappaB transactivation and negatively regulating inflammatory responses. Plays a role in the regulation of spermiation and in male fertility. The protein is E3 ubiquitin-protein ligase makorin-2 (MKRN2) of Homo sapiens (Human).